Consider the following 315-residue polypeptide: Ribosomal RNA small subunit methyltransferase H (315 aa).

S-adenosyl-L-methionine is bound by residues 37 to 39, Asp57, Phe83, Asp105, and Gln112; that span reads GGH.

Belongs to the methyltransferase superfamily. RsmH family.

It is found in the cytoplasm. The catalysed reaction is cytidine(1402) in 16S rRNA + S-adenosyl-L-methionine = N(4)-methylcytidine(1402) in 16S rRNA + S-adenosyl-L-homocysteine + H(+). Specifically methylates the N4 position of cytidine in position 1402 (C1402) of 16S rRNA. The sequence is that of Ribosomal RNA small subunit methyltransferase H from Pseudomonas putida (strain W619).